The sequence spans 154 residues: Aspartate carbamoyltransferase regulatory chain (154 aa).

Zn(2+) contacts are provided by Cys-109, Cys-114, Cys-138, and Cys-141.

Belongs to the PyrI family. Contains catalytic and regulatory chains. It depends on Zn(2+) as a cofactor.

Involved in allosteric regulation of aspartate carbamoyltransferase. The protein is Aspartate carbamoyltransferase regulatory chain of Pectobacterium carotovorum subsp. carotovorum (strain PC1).